The following is a 545-amino-acid chain: Cryptochrome-1 (545 aa).

A Photolyase/cryptochrome alpha/beta domain is found at 3 to 138 (VNNILWFRHG…KCVEKVSHTL (136 aa)). Residues Arg-236, Ser-264, Ser-266, Gln-307, His-374, 406–408 (DAD), Cys-412, and Asn-415 each bind FAD.

It belongs to the DNA photolyase class-1 family. In terms of assembly, interacts with tim and per; promoted by light conditions. FAD serves as cofactor.

The protein resides in the cytoplasm. The protein localises to the perinuclear region. Its subcellular location is the nucleus. Blue light-dependent regulator that is the input of the circadian feedback loop. Has no photolyase activity for cyclobutane pyrimidine dimers or 6-4 photoproducts. Regulation of expression by light suggests a role in photoreception for locomotor activity rhythms. Functions, together with per, as a transcriptional repressor required for the oscillation of peripheral circadian clocks and for the correct specification of clock cells. Genes directly activated by the transcription factors Clock (Clk) and cycle (cyc) are repressed by cry. The polypeptide is Cryptochrome-1 (Aedes aegypti (Yellowfever mosquito)).